A 613-amino-acid chain; its full sequence is pH-response transcription factor pacC/RIM101 (613 aa).

The disordered stretch occupies residues 1–61; sequence MSPSAPEQKP…SSTAPSTSSD (61 aa). Low complexity predominate over residues 11–60; that stretch reads QLQQQQQQQQQGSSSGDSSSGSVNDSKSVTPAPSATSSTSQSSTAPSTSS. 3 C2H2-type zinc fingers span residues 64-89, 100-124, and 130-152; these read LICRWNACNQKFPAPEALYEHICERH, LTCQWNSCRTTTVKRDHITSHIRVH, and HKCEFCGKSFKRPQDLKKHVKTH. The span at 146–157 shows a compositional bias: basic and acidic residues; the sequence is KKHVKTHADDSV. Disordered stretches follow at residues 146 to 186, 371 to 391, 406 to 535, and 565 to 613; these read KKHV…YDHT, NTPSPPTSHRSPTGMHVGADG, AISS…ATRE, and EFVE…MPGA. Positions 417–441 are enriched in low complexity; sequence PPSSSMSYTSGHSPSPSSSAMSPQS. 2 stretches are compositionally biased toward polar residues: residues 442-460 and 506-517; these read RHGSTASVMYPTLPTSLPA and SGASTPKASESA. The short motif at 451–454 is the YPX[LI] motif 1 element; that stretch reads YPTL. Residues 605 to 608 carry the YPX[LI] motif 2 motif; that stretch reads YPIL.

This sequence belongs to the pacC/RIM101 family. Binds to DNA. In terms of processing, activated by C-terminal proteolytic cleavage by signaling protease (probably palB/RIM13) at neutral to alkaline ambient pH.

It localises to the cytoplasm. The protein localises to the nucleus. Transcription factor that mediates regulation of both acid- and alkaline-expressed genes in response to ambient pH. At alkaline ambient pH, activates transcription of alkaline-expressed genes (including PAC1 itself) and represses transcription of acid-expressed genes. The chain is pH-response transcription factor pacC/RIM101 (PAC1) from Gibberella moniliformis (Maize ear and stalk rot fungus).